The following is a 321-amino-acid chain: Sideroflexin-3 (321 aa).

Position 1 is an N-acetylmethionine (Met1). The next 4 helical transmembrane spans lie at 146–164, 174–194, 225–245, and 266–286; these read LGTA…ALGL, LVGR…NIPL, IFQV…IPPV, and LQVG…CALF.

The protein belongs to the sideroflexin family. Widely expressed.

It is found in the mitochondrion membrane. The enzyme catalyses L-serine(in) = L-serine(out). In terms of biological role, mitochondrial serine transporter that mediates transport of serine into mitochondria, an important step of the one-carbon metabolism pathway. Mitochondrial serine is converted to glycine and formate, which then exits to the cytosol where it is used to generate the charged folates that serve as one-carbon donors. The chain is Sideroflexin-3 from Mus musculus (Mouse).